The following is a 395-amino-acid chain: Phosphoglycerate kinase (395 aa).

Substrate-binding positions include 22–24 (DLN), arginine 37, 60–63 (HFGR), arginine 116, and arginine 149. Residues lysine 199, glutamate 322, and 352–355 (GGDT) each bind ATP.

The protein belongs to the phosphoglycerate kinase family. In terms of assembly, monomer.

Its subcellular location is the cytoplasm. It carries out the reaction (2R)-3-phosphoglycerate + ATP = (2R)-3-phospho-glyceroyl phosphate + ADP. Its pathway is carbohydrate degradation; glycolysis; pyruvate from D-glyceraldehyde 3-phosphate: step 2/5. The protein is Phosphoglycerate kinase of Novosphingobium aromaticivorans (strain ATCC 700278 / DSM 12444 / CCUG 56034 / CIP 105152 / NBRC 16084 / F199).